Reading from the N-terminus, the 598-residue chain is Serine hydroxymethyltransferase 7 (598 aa).

Residues 57–85 (QLLEQKAEKTTTVDEPKKDGGGGGDQKED) form a disordered region. Over residues 61-85 (QKAEKTTTVDEPKKDGGGGGDQKED) the composition is skewed to basic and acidic residues. Lys370 carries the N6-(pyridoxal phosphate)lysine modification.

It belongs to the SHMT family. As to quaternary structure, homotetramer. It depends on pyridoxal 5'-phosphate as a cofactor.

It is found in the cytoplasm. It carries out the reaction (6R)-5,10-methylene-5,6,7,8-tetrahydrofolate + glycine + H2O = (6S)-5,6,7,8-tetrahydrofolate + L-serine. Its pathway is one-carbon metabolism; tetrahydrofolate interconversion. Functionally, catalyzes the interconversion of serine and glycine. This Arabidopsis thaliana (Mouse-ear cress) protein is Serine hydroxymethyltransferase 7 (SHM7).